A 507-amino-acid chain; its full sequence is Cytochrome P450 monooxygenase cloA (507 aa).

Residues tryptophan 15–isoleucine 35 form a helical membrane-spanning segment. N-linked (GlcNAc...) asparagine glycosylation occurs at asparagine 247. Cysteine 450 provides a ligand contact to heme.

The protein belongs to the cytochrome P450 family. Heme serves as cofactor.

The protein localises to the membrane. Its pathway is alkaloid biosynthesis; ergot alkaloid biosynthesis. Its function is as follows. Cytochrome P450 monooxygenase; part of the gene cluster that mediates the biosynthesis of fungal ergot alkaloid. DmaW catalyzes the first step of ergot alkaloid biosynthesis by condensing dimethylallyl diphosphate (DMAP) and tryptophan to form 4-dimethylallyl-L-tryptophan. The second step is catalyzed by the methyltransferase easF that methylates 4-dimethylallyl-L-tryptophan in the presence of S-adenosyl-L-methionine, resulting in the formation of 4-dimethylallyl-L-abrine. The catalase easC and the FAD-dependent oxidoreductase easE then transform 4-dimethylallyl-L-abrine to chanoclavine-I which is further oxidized by easD in the presence of NAD(+), resulting in the formation of chanoclavine-I aldehyde. Agroclavine dehydrogenase easG then mediates the conversion of chanoclavine-I aldehyde to agroclavine via a non-enzymatic adduct reaction: the substrate is an iminium intermediate that is formed spontaneously from chanoclavine-I aldehyde in the presence of glutathione. The presence of easA is not required to complete this reaction. Further conversion of agroclavine to paspalic acid is a two-step process involving oxidation of agroclavine to elymoclavine and of elymoclavine to paspalic acid, the second step being performed by the elymoclavine oxidase cloA. Paspalic acid is then further converted to D-lysergic acid. Ergopeptines are assembled from D-lysergic acid and three different amino acids by the D-lysergyl-peptide-synthetases composed each of a monomudular and a trimodular nonribosomal peptide synthetase subunit. LpsB and lpsC encode the monomodular subunits responsible for D-lysergic acid activation and incorporation into the ergopeptine backbone. LpsA1 and A2 subunits encode the trimodular nonribosomal peptide synthetase assembling the tripeptide portion of ergopeptines. LpsA1 is responsible for formation of the major ergopeptine, ergotamine, and lpsA2 for alpha-ergocryptine, the minor ergopeptine of the total alkaloid mixture elaborated by C.purpurea. D-lysergyl-tripeptides are assembled by the nonribosomal peptide synthetases and released as N-(D-lysergyl-aminoacyl)-lactams. Cyclolization of the D-lysergyl-tripeptides is performed by the Fe(2+)/2-ketoglutarate-dependent dioxygenase easH which introduces a hydroxyl group into N-(D-lysergyl-aminoacyl)-lactam at alpha-C of the aminoacyl residue followed by spontaneous condensation with the terminal lactam carbonyl group. The sequence is that of Cytochrome P450 monooxygenase cloA from Claviceps purpurea (Ergot fungus).